Reading from the N-terminus, the 114-residue chain is Ribosome-binding factor A (114 aa).

It belongs to the RbfA family. As to quaternary structure, monomer. Binds 30S ribosomal subunits, but not 50S ribosomal subunits or 70S ribosomes.

The protein localises to the cytoplasm. Functionally, one of several proteins that assist in the late maturation steps of the functional core of the 30S ribosomal subunit. Associates with free 30S ribosomal subunits (but not with 30S subunits that are part of 70S ribosomes or polysomes). Required for efficient processing of 16S rRNA. May interact with the 5'-terminal helix region of 16S rRNA. The sequence is that of Ribosome-binding factor A from Vesicomyosocius okutanii subsp. Calyptogena okutanii (strain HA).